The sequence spans 41 residues: Alpha-1B-glycoprotein (41 aa).

Asparagine 23 carries an N-linked (GlcNAc...) asparagine glycan.

As to quaternary structure, interacts with CRISP3. Post-translationally, glycosylated. In terms of tissue distribution, plasma.

Its subcellular location is the secreted. The sequence is that of Alpha-1B-glycoprotein (A1BG) from Equus caballus (Horse).